The following is a 199-amino-acid chain: MNILQINSSARSDASNSTRVANSIVERLRASHPGAAVVVRSLAQNPHPVLDEAALGALFTPADKRTPEQTARVALDDVLIAEIQAADAVVIGVPMYNFGVPVQLKNWIDAITRVKVTFRYTANGPEGLLKDKKVYVAFARGGRYRDTPADTQVPYLKTIFGFLGMTDVHFVFAEGLAMGADAAEQAFAEAERDIEAALA.

FMN contacts are provided by residues S9, 15–17, and 95–98; these read SNS and MYNF.

This sequence belongs to the azoreductase type 1 family. As to quaternary structure, homodimer. The cofactor is FMN.

The catalysed reaction is 2 a quinone + NADH + H(+) = 2 a 1,4-benzosemiquinone + NAD(+). It catalyses the reaction N,N-dimethyl-1,4-phenylenediamine + anthranilate + 2 NAD(+) = 2-(4-dimethylaminophenyl)diazenylbenzoate + 2 NADH + 2 H(+). In terms of biological role, quinone reductase that provides resistance to thiol-specific stress caused by electrophilic quinones. Its function is as follows. Also exhibits azoreductase activity. Catalyzes the reductive cleavage of the azo bond in aromatic azo compounds to the corresponding amines. The chain is FMN-dependent NADH:quinone oxidoreductase from Aromatoleum aromaticum (strain DSM 19018 / LMG 30748 / EbN1) (Azoarcus sp. (strain EbN1)).